Here is a 96-residue protein sequence, read N- to C-terminus: UPF0235 protein Acid345_4205 (96 aa).

It belongs to the UPF0235 family.

The polypeptide is UPF0235 protein Acid345_4205 (Koribacter versatilis (strain Ellin345)).